We begin with the raw amino-acid sequence, 218 residues long: Putative glutamine transport system permease protein GlnP (218 aa).

Residues 19-208 (TLITLKYSVI…ILVMLISFIA (190 aa)) enclose the ABC transmembrane type-1 domain. A run of 4 helical transmembrane segments spans residues 25–45 (YSVIAVIFGLVIGVLLALCKV), 57–79 (FYTSIFRGTPLLIQLSIIYFASP), 86–108 (FTVFMAGAISFSLNSGAYVSEVI), and 187–207 (FFPMIVAACCYYILVMLISFI).

This sequence belongs to the binding-protein-dependent transport system permease family. HisMQ subfamily.

The protein resides in the cell inner membrane. In terms of biological role, part of the binding-protein-dependent transport system for glutamine; probably responsible for the translocation of the substrate across the membrane. This chain is Putative glutamine transport system permease protein GlnP (glnP), found in Rickettsia bellii (strain RML369-C).